Reading from the N-terminus, the 419-residue chain is Phosphoribosylamine--glycine ligase (419 aa).

An ATP-grasp domain is found at 109 to 311 (KQLLIEAGVP…LEKVLMACVE (203 aa)). Position 135-191 (135-191 (ATKMGAPIVVKADGLAAGKGVIVAQTSAEATTAIAELFDQGFEKIVVEEFLPGEEVS)) interacts with ATP. Glutamate 281 and asparagine 283 together coordinate Mg(2+).

Belongs to the GARS family. It depends on Mg(2+) as a cofactor. Mn(2+) is required as a cofactor.

It catalyses the reaction 5-phospho-beta-D-ribosylamine + glycine + ATP = N(1)-(5-phospho-beta-D-ribosyl)glycinamide + ADP + phosphate + H(+). It functions in the pathway purine metabolism; IMP biosynthesis via de novo pathway; N(1)-(5-phospho-D-ribosyl)glycinamide from 5-phospho-alpha-D-ribose 1-diphosphate: step 2/2. The chain is Phosphoribosylamine--glycine ligase from Synechocystis sp. (strain ATCC 27184 / PCC 6803 / Kazusa).